The sequence spans 53 residues: Cytochrome c-552 (53 aa).

Heme c-binding residues include Cys19, Cys22, His23, and Met44.

Binds 1 heme c group covalently per subunit.

It is found in the cell membrane. The protein is Cytochrome c-552 of Schinkia azotoformans (Bacillus azotoformans).